The sequence spans 70 residues: Large ribosomal subunit protein bL28 (70 aa).

Belongs to the bacterial ribosomal protein bL28 family.

The protein is Large ribosomal subunit protein bL28 of Thermosipho melanesiensis (strain DSM 12029 / CIP 104789 / BI429).